The sequence spans 449 residues: 3-phosphoshikimate 1-carboxyvinyltransferase (449 aa).

3-phosphoshikimate-binding residues include Lys-28, Ser-29, and Arg-33. Residue Lys-28 participates in phosphoenolpyruvate binding. Residues Gly-105 and Arg-133 each coordinate phosphoenolpyruvate. Residues Ser-179, Gln-181, Asp-332, and Lys-359 each coordinate 3-phosphoshikimate. Gln-181 lines the phosphoenolpyruvate pocket. The active-site Proton acceptor is Asp-332. Residues Arg-363 and Arg-406 each coordinate phosphoenolpyruvate.

This sequence belongs to the EPSP synthase family. As to quaternary structure, monomer.

The protein resides in the cytoplasm. It catalyses the reaction 3-phosphoshikimate + phosphoenolpyruvate = 5-O-(1-carboxyvinyl)-3-phosphoshikimate + phosphate. It participates in metabolic intermediate biosynthesis; chorismate biosynthesis; chorismate from D-erythrose 4-phosphate and phosphoenolpyruvate: step 6/7. Its function is as follows. Catalyzes the transfer of the enolpyruvyl moiety of phosphoenolpyruvate (PEP) to the 5-hydroxyl of shikimate-3-phosphate (S3P) to produce enolpyruvyl shikimate-3-phosphate and inorganic phosphate. The chain is 3-phosphoshikimate 1-carboxyvinyltransferase from Nitrobacter winogradskyi (strain ATCC 25391 / DSM 10237 / CIP 104748 / NCIMB 11846 / Nb-255).